The following is a 285-amino-acid chain: 4-diphosphocytidyl-2-C-methyl-D-erythritol kinase (285 aa).

Lysine 10 is a catalytic residue. Position 92–102 (92–102) interacts with ATP; it reads PFGAGLGGGSS. Residue aspartate 134 is part of the active site.

It belongs to the GHMP kinase family. IspE subfamily.

It catalyses the reaction 4-CDP-2-C-methyl-D-erythritol + ATP = 4-CDP-2-C-methyl-D-erythritol 2-phosphate + ADP + H(+). It functions in the pathway isoprenoid biosynthesis; isopentenyl diphosphate biosynthesis via DXP pathway; isopentenyl diphosphate from 1-deoxy-D-xylulose 5-phosphate: step 3/6. Its function is as follows. Catalyzes the phosphorylation of the position 2 hydroxy group of 4-diphosphocytidyl-2C-methyl-D-erythritol. This is 4-diphosphocytidyl-2-C-methyl-D-erythritol kinase from Chloroherpeton thalassium (strain ATCC 35110 / GB-78).